Consider the following 124-residue polypeptide: Ribonuclease pancreatic (124 aa).

Residues 1-13 (SETAAEKFERQHM) show a composition bias toward basic and acidic residues. A disordered region spans residues 1–23 (SETAAEKFERQHMDSYSSSSSNS). Residues K7 and R10 each contribute to the substrate site. Catalysis depends on H12, which acts as the Proton acceptor. 4 disulfides stabilise this stretch: C26-C84, C40-C95, C58-C110, and C65-C72. Substrate-binding positions include 41-45 (KPVNT), K66, and R85. H119 serves as the catalytic Proton donor.

This sequence belongs to the pancreatic ribonuclease family. Monomer. Interacts with and forms tight 1:1 complexes with RNH1. Dimerization of two such complexes may occur. Interaction with RNH1 inhibits this protein. Pancreas.

It localises to the secreted. The catalysed reaction is an [RNA] containing cytidine + H2O = an [RNA]-3'-cytidine-3'-phosphate + a 5'-hydroxy-ribonucleotide-3'-[RNA].. The enzyme catalyses an [RNA] containing uridine + H2O = an [RNA]-3'-uridine-3'-phosphate + a 5'-hydroxy-ribonucleotide-3'-[RNA].. Endonuclease that catalyzes the cleavage of RNA on the 3' side of pyrimidine nucleotides. Acts on single-stranded and double-stranded RNA. This is Ribonuclease pancreatic (RNASE1) from Camelus dromedarius (Dromedary).